The primary structure comprises 883 residues: Envelope glycoprotein B (883 aa).

The signal sequence occupies residues 1–31 (MQSYIAVNIDMASLKMLICVCVAILIPSTLS). The Virion surface portion of the chain corresponds to 32-750 (QDSHGIAGII…SGIASFLSNP (719 aa)). 5 disulfides stabilise this stretch: Cys77–Cys535, Cys94–Cys491, Cys167–Cys229, Cys321–Cys369, and Cys558–Cys608. Residues Asn102 and Asn121 are each glycosylated (N-linked (GlcNAc...) asparagine; by host). An involved in fusion and/or binding to host membrane region spans residues 134–140 (TWALFSR). Asn211 is a glycosylation site (N-linked (GlcNAc...) asparagine; by host). An involved in fusion and/or binding to host membrane region spans residues 216-223 (HQTLGYRT). Residues Asn262 and Asn360 are each glycosylated (N-linked (GlcNAc...) asparagine; by host). The segment at 428-457 (QNHLPRGRERRQAAGRRTASLQSGPQGDRI) is disordered. Asn579, Asn635, and Asn649 each carry an N-linked (GlcNAc...) asparagine; by host glycan. Hydrophobic membrane proximal region stretches follow at residues 694 to 748 (IDTV…SFLS) and 724 to 744 (ALGTVVMTAAAAVISTVSGIA). A helical membrane pass occupies residues 751–771 (FAALGIGIAVVVSIILGLLAF). Residues 772–883 (KYVMNLKSNP…PSWAEESEDE (112 aa)) are Intravirion-facing. Residues 791 to 817 (PPAGTPPRPSRRYYKDEEEVEEDSDED) form a disordered region. Over residues 806-817 (DEEEVEEDSDED) the composition is skewed to acidic residues. Positions 868–871 (YPLL) match the Internalization motif motif.

This sequence belongs to the herpesviridae glycoprotein B family. Homotrimer; disulfide-linked. Binds to heparan sulfate proteoglycans. Interacts with gH/gL heterodimer. A proteolytic cleavage by host furin generates two subunits that remain linked by disulfide bonds.

Its subcellular location is the virion membrane. The protein resides in the host cell membrane. It is found in the host endosome membrane. It localises to the host Golgi apparatus membrane. Functionally, envelope glycoprotein that forms spikes at the surface of virion envelope. Essential for the initial attachment to heparan sulfate moieties of the host cell surface proteoglycans. Involved in fusion of viral and cellular membranes leading to virus entry into the host cell. Following initial binding to its host receptors, membrane fusion is mediated by the fusion machinery composed at least of gB and the heterodimer gH/gL. May be involved in the fusion between the virion envelope and the outer nuclear membrane during virion egress. This chain is Envelope glycoprotein B, found in Gallus gallus (Chicken).